A 45-amino-acid chain; its full sequence is Photosystem II reaction center protein K (45 aa).

The propeptide occupies Met-1–Ala-8. A helical transmembrane segment spans residues Ala-24–Phe-44.

It belongs to the PsbK family. As to quaternary structure, PSII is composed of 1 copy each of membrane proteins PsbA, PsbB, PsbC, PsbD, PsbE, PsbF, PsbH, PsbI, PsbJ, PsbK, PsbL, PsbM, PsbT, PsbX, PsbY, PsbZ, Psb30/Ycf12, at least 3 peripheral proteins of the oxygen-evolving complex and a large number of cofactors. It forms dimeric complexes.

Its subcellular location is the plastid. It is found in the chloroplast thylakoid membrane. Functionally, one of the components of the core complex of photosystem II (PSII). PSII is a light-driven water:plastoquinone oxidoreductase that uses light energy to abstract electrons from H(2)O, generating O(2) and a proton gradient subsequently used for ATP formation. It consists of a core antenna complex that captures photons, and an electron transfer chain that converts photonic excitation into a charge separation. This chain is Photosystem II reaction center protein K, found in Guillardia theta (Cryptophyte).